Consider the following 161-residue polypeptide: MNPVRKKRLYIVLAILCGVSIAVALALTALQENINLFYTPSQIANGEAPEGTRIRAGGLVEEGSVKRSPDTLEVDFVVTDGAHGVTIRYHGILPDLFREGQGIVALGRVNEDGVLVADEVLAKHDENYMPPEVMQALEKSGMMQKHNEAKAAKGYQQESAQ.

Over 1–8 (MNPVRKKR) the chain is Cytoplasmic. Residues 9–29 (LYIVLAILCGVSIAVALALTA) traverse the membrane as a helical; Signal-anchor for type II membrane protein segment. Residues 30–161 (LQENINLFYT…AKGYQQESAQ (132 aa)) lie on the Periplasmic side of the membrane. Heme is bound by residues His124 and Tyr128.

The protein belongs to the CcmE/CycJ family.

It localises to the cell inner membrane. In terms of biological role, heme chaperone required for the biogenesis of c-type cytochromes. Transiently binds heme delivered by CcmC and transfers the heme to apo-cytochromes in a process facilitated by CcmF and CcmH. In Ectopseudomonas mendocina (strain ymp) (Pseudomonas mendocina), this protein is Cytochrome c-type biogenesis protein CcmE.